Reading from the N-terminus, the 555-residue chain is Formate--tetrahydrofolate ligase (555 aa).

65–72 (TPAGEGKS) serves as a coordination point for ATP.

The protein belongs to the formate--tetrahydrofolate ligase family.

The enzyme catalyses (6S)-5,6,7,8-tetrahydrofolate + formate + ATP = (6R)-10-formyltetrahydrofolate + ADP + phosphate. It functions in the pathway one-carbon metabolism; tetrahydrofolate interconversion. The sequence is that of Formate--tetrahydrofolate ligase from Staphylococcus aureus (strain MRSA252).